A 241-amino-acid chain; its full sequence is Beta-nerve growth factor (241 aa).

A signal peptide spans 1-18 (MSMLFYTLITAFLIGIQA). Positions 19-121 (EPHSESNVPA…PVNRTHRSKR (103 aa)) are excised as a propeptide. 3 N-linked (GlcNAc...) asparagine glycosylation sites follow: asparagine 69, asparagine 114, and asparagine 166. Cystine bridges form between cysteine 136–cysteine 201, cysteine 179–cysteine 229, and cysteine 189–cysteine 231.

It belongs to the NGF-beta family. In terms of assembly, homodimer. The homodimer interacts with a single NTRK1 chain. The homodimer interacts with a single NGFR chain. The NGF dimer interacts with a single SORCS2 chain (via extracellular domain). The NGF precursor (proNGF) binds to a receptor complex formed by SORT1 and NGFR, which leads to NGF endocytosis. Both mature NGF and the immature NGF precursor (proNGF) interact with SORCS2 and with the heterodimer formed by SORCS2 and NGFR (via extracellular domains). The NGF precursor (proNGF) has much higher affinity for SORCS2 than mature NGF. The NGF precursor (proNGF) has much higher affinity for SORT1 than mature NGF. Interacts with ADAM10 in a divalent cation-dependent manner. Interacts with SORCS3.

It is found in the secreted. Its subcellular location is the endosome lumen. Its function is as follows. Nerve growth factor is important for the development and maintenance of the sympathetic and sensory nervous systems. Extracellular ligand for the NTRK1 and NGFR receptors, activates cellular signaling cascades through those receptor tyrosine kinase to regulate neuronal proliferation, differentiation and survival. Inhibits metalloproteinase dependent proteolysis of platelet glycoprotein VI. This Saimiri boliviensis boliviensis (Bolivian squirrel monkey) protein is Beta-nerve growth factor (NGF).